A 194-amino-acid chain; its full sequence is dCTP deaminase (194 aa).

DCTP contacts are provided by residues 110 to 115 (RSSLAR), Asp128, 136 to 138 (VLE), Tyr171, Lys178, and Gln182. Residue Glu138 is the Proton donor/acceptor of the active site.

Belongs to the dCTP deaminase family. As to quaternary structure, homotrimer.

The catalysed reaction is dCTP + H2O + H(+) = dUTP + NH4(+). It participates in pyrimidine metabolism; dUMP biosynthesis; dUMP from dCTP (dUTP route): step 1/2. Its function is as follows. Catalyzes the deamination of dCTP to dUTP. The polypeptide is dCTP deaminase (Psychromonas ingrahamii (strain DSM 17664 / CCUG 51855 / 37)).